Here is a 121-residue protein sequence, read N- to C-terminus: Large ribosomal subunit protein uL14c (121 aa).

The protein belongs to the universal ribosomal protein uL14 family. Part of the 50S ribosomal subunit.

Its subcellular location is the plastid. It is found in the chloroplast. In terms of biological role, binds to 23S rRNA. This Guillardia theta (Cryptophyte) protein is Large ribosomal subunit protein uL14c.